Reading from the N-terminus, the 545-residue chain is 4-coumarate--CoA ligase 2 (545 aa).

Residues serine 192, serine 193, glycine 194, threonine 195, threonine 196, and lysine 200 each coordinate ATP. (E)-4-coumaroyl-AMP is bound by residues tyrosine 242 and serine 246. Residue lysine 263 coordinates CoA. The tract at residues 265–334 is SBD1; the sequence is DIAQFLELIP…AKFPNAKLGQ (70 aa). (E)-4-coumaroyl-AMP contacts are provided by alanine 312, glutamine 334, glycine 335, threonine 339, and methionine 347. Glutamine 334, glycine 335, and threonine 339 together coordinate ATP. Residues 335–402 are SBD2; it reads GYGMTEAGPV…IRGDQIMKGY (68 aa). Residues aspartate 423 and arginine 438 each coordinate ATP. (E)-4-coumaroyl-AMP is bound by residues lysine 440 and lysine 444. Lysine 446 and glycine 447 together coordinate CoA. Lysine 529 contributes to the ATP binding site.

This sequence belongs to the ATP-dependent AMP-binding enzyme family. The cofactor is Mg(2+).

It catalyses the reaction (E)-4-coumarate + ATP + CoA = (E)-4-coumaroyl-CoA + AMP + diphosphate. It carries out the reaction (E)-4-coumarate + ATP + H(+) = (E)-4-coumaroyl-AMP + diphosphate. The enzyme catalyses (E)-4-coumaroyl-AMP + CoA = (E)-4-coumaroyl-CoA + AMP + H(+). The protein operates within phytoalexin biosynthesis; 3,4',5-trihydroxystilbene biosynthesis; 3,4',5-trihydroxystilbene from trans-4-coumarate: step 1/2. Carboxylate--CoA ligase that may use 4-coumarate as substrate. Follows a two-step reaction mechanism, wherein the carboxylate substrate first undergoes adenylation by ATP, followed by a thioesterification in the presence of CoA to yield the final CoA thioester. The polypeptide is 4-coumarate--CoA ligase 2 (4CL2) (Solanum tuberosum (Potato)).